The chain runs to 280 residues: Bifunctional protein FolD (280 aa).

Residues 164–166, Ser-189, and Val-230 contribute to the NADP(+) site; that span reads GRS.

The protein belongs to the tetrahydrofolate dehydrogenase/cyclohydrolase family. In terms of assembly, homodimer.

The enzyme catalyses (6R)-5,10-methylene-5,6,7,8-tetrahydrofolate + NADP(+) = (6R)-5,10-methenyltetrahydrofolate + NADPH. It carries out the reaction (6R)-5,10-methenyltetrahydrofolate + H2O = (6R)-10-formyltetrahydrofolate + H(+). It functions in the pathway one-carbon metabolism; tetrahydrofolate interconversion. Functionally, catalyzes the oxidation of 5,10-methylenetetrahydrofolate to 5,10-methenyltetrahydrofolate and then the hydrolysis of 5,10-methenyltetrahydrofolate to 10-formyltetrahydrofolate. In Geotalea uraniireducens (strain Rf4) (Geobacter uraniireducens), this protein is Bifunctional protein FolD.